Here is a 296-residue protein sequence, read N- to C-terminus: 4-amino-4-deoxyprephenate dehydrogenase (296 aa).

One can recognise a Prephenate/arogenate dehydrogenase domain in the interval 9–288; that stretch reads RCVVVGGAGA…EHGAELERLC (280 aa).

This sequence belongs to the prephenate/arogenate dehydrogenase family.

It carries out the reaction 4-amino-4-deoxyprephenate + NAD(+) = 3-(4-aminophenyl)pyruvate + CO2 + NADH + H(+). The protein operates within antibiotic biosynthesis. In terms of biological role, involved in pristinamycin I biosynthesis. Probably catalyzes the formation of 3-(4-aminophenyl)pyruvate from 4-amino-4-deoxyprephenate. This chain is 4-amino-4-deoxyprephenate dehydrogenase, found in Streptomyces pristinaespiralis.